The primary structure comprises 277 residues: Putative phosphoenolpyruvate synthase regulatory protein (277 aa).

152-159 serves as a coordination point for ADP; the sequence is GVSRCGKT.

The protein belongs to the pyruvate, phosphate/water dikinase regulatory protein family. PSRP subfamily.

The catalysed reaction is [pyruvate, water dikinase] + ADP = [pyruvate, water dikinase]-phosphate + AMP + H(+). It catalyses the reaction [pyruvate, water dikinase]-phosphate + phosphate + H(+) = [pyruvate, water dikinase] + diphosphate. Bifunctional serine/threonine kinase and phosphorylase involved in the regulation of the phosphoenolpyruvate synthase (PEPS) by catalyzing its phosphorylation/dephosphorylation. In Chromohalobacter salexigens (strain ATCC BAA-138 / DSM 3043 / CIP 106854 / NCIMB 13768 / 1H11), this protein is Putative phosphoenolpyruvate synthase regulatory protein.